The sequence spans 649 residues: 1-deoxy-D-xylulose-5-phosphate synthase 1 (649 aa).

Thiamine diphosphate contacts are provided by residues H79 and 120 to 122 (AHS). D151 contacts Mg(2+). Thiamine diphosphate-binding positions include 152-153 (GS), N180, Y289, and E371. N180 contributes to the Mg(2+) binding site.

Belongs to the transketolase family. DXPS subfamily. As to quaternary structure, homodimer. Mg(2+) is required as a cofactor. Thiamine diphosphate serves as cofactor.

It carries out the reaction D-glyceraldehyde 3-phosphate + pyruvate + H(+) = 1-deoxy-D-xylulose 5-phosphate + CO2. Its pathway is metabolic intermediate biosynthesis; 1-deoxy-D-xylulose 5-phosphate biosynthesis; 1-deoxy-D-xylulose 5-phosphate from D-glyceraldehyde 3-phosphate and pyruvate: step 1/1. Its function is as follows. Catalyzes the acyloin condensation reaction between C atoms 2 and 3 of pyruvate and glyceraldehyde 3-phosphate to yield 1-deoxy-D-xylulose-5-phosphate (DXP). This Zymomonas mobilis subsp. mobilis (strain ATCC 31821 / ZM4 / CP4) protein is 1-deoxy-D-xylulose-5-phosphate synthase 1.